Reading from the N-terminus, the 329-residue chain is 4-hydroxythreonine-4-phosphate dehydrogenase (329 aa).

2 residues coordinate substrate: H137 and T138. A divalent metal cation contacts are provided by H167, H212, and H267. Substrate-binding residues include K275, N284, and R293.

The protein belongs to the PdxA family. As to quaternary structure, homodimer. Zn(2+) is required as a cofactor. The cofactor is Mg(2+). It depends on Co(2+) as a cofactor.

It is found in the cytoplasm. The enzyme catalyses 4-(phosphooxy)-L-threonine + NAD(+) = 3-amino-2-oxopropyl phosphate + CO2 + NADH. Its pathway is cofactor biosynthesis; pyridoxine 5'-phosphate biosynthesis; pyridoxine 5'-phosphate from D-erythrose 4-phosphate: step 4/5. Its function is as follows. Catalyzes the NAD(P)-dependent oxidation of 4-(phosphooxy)-L-threonine (HTP) into 2-amino-3-oxo-4-(phosphooxy)butyric acid which spontaneously decarboxylates to form 3-amino-2-oxopropyl phosphate (AHAP). This Stutzerimonas stutzeri (strain A1501) (Pseudomonas stutzeri) protein is 4-hydroxythreonine-4-phosphate dehydrogenase.